The sequence spans 293 residues: Glycine--tRNA ligase alpha subunit (293 aa).

It belongs to the class-II aminoacyl-tRNA synthetase family. Tetramer of two alpha and two beta subunits.

It localises to the cytoplasm. The enzyme catalyses tRNA(Gly) + glycine + ATP = glycyl-tRNA(Gly) + AMP + diphosphate. This Acaryochloris marina (strain MBIC 11017) protein is Glycine--tRNA ligase alpha subunit.